The chain runs to 189 residues: Molybdenum cofactor guanylyltransferase (189 aa).

Residues 10 to 12 (LAG), K23, N51, D69, and D99 contribute to the GTP site. D99 contacts Mg(2+).

The protein belongs to the MobA family. As to quaternary structure, monomer. Requires Mg(2+) as cofactor.

Its subcellular location is the cytoplasm. The catalysed reaction is Mo-molybdopterin + GTP + H(+) = Mo-molybdopterin guanine dinucleotide + diphosphate. Its function is as follows. Transfers a GMP moiety from GTP to Mo-molybdopterin (Mo-MPT) cofactor (Moco or molybdenum cofactor) to form Mo-molybdopterin guanine dinucleotide (Mo-MGD) cofactor. This is Molybdenum cofactor guanylyltransferase from Pasteurella multocida (strain Pm70).